The following is a 72-amino-acid chain: Translation initiation factor IF-1 (72 aa).

Residues 1–72 (MAKEDNIEMQ…TKGRIVFRAR (72 aa)) enclose the S1-like domain.

Belongs to the IF-1 family. As to quaternary structure, component of the 30S ribosomal translation pre-initiation complex which assembles on the 30S ribosome in the order IF-2 and IF-3, IF-1 and N-formylmethionyl-tRNA(fMet); mRNA recruitment can occur at any time during PIC assembly.

It is found in the cytoplasm. Its function is as follows. One of the essential components for the initiation of protein synthesis. Stabilizes the binding of IF-2 and IF-3 on the 30S subunit to which N-formylmethionyl-tRNA(fMet) subsequently binds. Helps modulate mRNA selection, yielding the 30S pre-initiation complex (PIC). Upon addition of the 50S ribosomal subunit IF-1, IF-2 and IF-3 are released leaving the mature 70S translation initiation complex. This Shewanella baltica (strain OS155 / ATCC BAA-1091) protein is Translation initiation factor IF-1.